The following is a 141-amino-acid chain: Cystatin (141 aa).

The N-terminal stretch at 1–26 is a signal peptide; that stretch reads MVHSQLPVAGPLRLLCALLLLPSATM. The Cystatin domain maps to 29 to 129; it reads GGLSPRSVTD…CHFQVWSRPW (101 aa). The short motif at 73–77 is the Secondary area of contact element; it reads QVVSG. 2 cysteine pairs are disulfide-bonded: Cys-91–Cys-107 and Cys-120–Cys-140.

This sequence belongs to the cystatin family. Expressed at a low level by the venom gland (at protein level).

The protein resides in the secreted. Inhibits various C1 cysteine proteases including cathepsin L, papain and cathepsin B. This protein has no toxic activity and its function in the venom is unknown. It may play a role as a housekeeping or regulatory protein. This Pseudechis australis (Mulga snake) protein is Cystatin.